Consider the following 382-residue polypeptide: MSSNTAGQVIRCKAAVAWEAGKPLVIEEVEVAPPQKMEVRLKILFTSLCHTDVYFWEAKGQTPLFPRIFGHEAGGIVESVGEGVTDLKPGDHVLPVFTGECQQCRHCKSEESNMCDLLRINTDRGVMIHDGQTRFSKDGKPIYHFVGTSTFSEYTVCHSGCVTKIDPQAPLDKVCVLSCGISTGLGATLNVAKPTKGSTVAIFGLGAVGLAAAEGARIAGASRIIGVDLNPSRFNDAKKFGVTEFVNPKDHGDKPVQQVIAEMTDGGVDRSVECTGNVNAMISAFECVHDGWGVAVLVGVPNKDDAFKTHPMNLLNERTLKGTFFGNYKPKSDIPSVVDKYMKKELELEKFITHQVPFSEINKAFDYMLKGESIRCMITMEH.

Zn(2+) is bound by residues cysteine 49, threonine 51, histidine 71, cysteine 101, cysteine 104, cysteine 107, cysteine 115, and cysteine 179. The an alcohol site is built by threonine 51 and histidine 71. Residue threonine 51 participates in NAD(+) binding. NAD(+) is bound by residues 204–209 (GLGAVG), aspartate 228, arginine 233, threonine 275, valine 298, 298–300 (VGV), phenylalanine 325, and arginine 375.

It belongs to the zinc-containing alcohol dehydrogenase family. Homodimer. Zn(2+) serves as cofactor.

Its subcellular location is the cytoplasm. It carries out the reaction a primary alcohol + NAD(+) = an aldehyde + NADH + H(+). It catalyses the reaction a secondary alcohol + NAD(+) = a ketone + NADH + H(+). Its function is as follows. This protein is responsible for the conversion of alcohols to aldehydes in plants and is important for NAD metabolism during anaerobic respiration. In Petunia hybrida (Petunia), this protein is Alcohol dehydrogenase 1 (ADH1).